Here is a 495-residue protein sequence, read N- to C-terminus: Pleckstrin homology domain-containing family O member 2 (495 aa).

A PH domain is found at 18–120 (TADKAGWIKK…WIKALNEGIN (103 aa)). Phosphoserine occurs at positions 165 and 168. The tract at residues 171–411 (LSRLDLDVPD…ESPQHPRLPK (241 aa)) is disordered. A compositionally biased stretch (pro residues) spans 198-213 (QEPPRALMPPVKPSPG). The residue at position 233 (Thr-233) is a Phosphothreonine. Positions 235-244 (DSASSGANPE) are enriched in polar residues. Phosphoserine is present on residues Ser-236, Ser-238, Ser-239, Ser-274, and Ser-292. Thr-296 is modified (phosphothreonine). A compositionally biased stretch (low complexity) spans 324-335 (SGVDASGSSQSS). Polar residues predominate over residues 336 to 350 (EAPETTSPEPTQVSV). The residue at position 395 (Ser-395) is a Phosphoserine. Residues 399–411 (LLRESPQHPRLPK) show a composition bias toward basic and acidic residues. Residues 444-469 (CAESLLSQAVEQLRQATQVLQEMRDL) are a coiled coil.

This Mus musculus (Mouse) protein is Pleckstrin homology domain-containing family O member 2 (Plekho2).